Consider the following 881-residue polypeptide: Fanconi anemia core complex-associated protein 100 (881 aa).

Positions 94-119 (GRSRSTSQDDRDSEDGDQPSPVIPVD) are disordered. Ser667 is subject to Phosphoserine.

Belongs to the multisubunit FA complex composed of FANCA, FANCB, FANCC, FANCE, FANCF, FANCG, FANCL/PHF9, FANCM, FAAP24 and FAAP100. Forms a subcomplex with FANCB and FANCL.

The protein resides in the nucleus. In terms of biological role, plays a role in Fanconi anemia-associated DNA damage response network. Regulates FANCD2 monoubiquitination and the stability of the FA core complex. Induces chromosomal instability as well as hypersensitivity to DNA cross-linking agents, when repressed. This chain is Fanconi anemia core complex-associated protein 100, found in Homo sapiens (Human).